Consider the following 879-residue polypeptide: Paramyosin, long form (879 aa).

A nonhelical region region spans residues 1-31; it reads MSSSQAVRSSKYSYRATSTGPGTADVNIEYI. At S18 the chain carries Phosphoserine. Positions 32–858 form a coiled coil; the sequence is QDLSSLSRLE…IIRAKHRTFV (827 aa). Residues 859–879 are nonhelical region; it reads TTSTVPGSQVYIQETTRTITE.

Belongs to the paramyosin family. Heterodimer of two isoforms. The more-acidic and less-abundant isoform is phosphorylated. In terms of tissue distribution, expressed in all larval and adult muscle tissues. Expression is five times higher in tubular than in fibrillar muscles.

It localises to the cytoplasm. Its subcellular location is the myofibril. In terms of biological role, paramyosin is a major structural component of many thick filaments isolated from invertebrate muscles. This is Paramyosin, long form (Prm) from Drosophila melanogaster (Fruit fly).